The primary structure comprises 513 residues: Fumarate reductase (513 aa).

FAD is bound at residue 41 to 55 (AIVIGGGLAGLSATN). At serine 100 the chain carries Phosphoserine. Catalysis depends on residues histidine 288 and arginine 311.

The protein belongs to the FAD-dependent oxidoreductase 2 family. FRD/SDH subfamily. It depends on FAD as a cofactor.

It is found in the cytoplasm. It localises to the mitochondrion. The protein localises to the nucleus. The enzyme catalyses succinate + NAD(+) = fumarate + NADH + H(+). Functionally, irreversibly catalyzes the reduction of fumarate to succinate. In Schizosaccharomyces pombe (strain 972 / ATCC 24843) (Fission yeast), this protein is Fumarate reductase (osm1).